A 107-amino-acid chain; its full sequence is U-scoloptoxin(19)-Sm1a (107 aa).

An N-terminal signal peptide occupies residues 1-20; that stretch reads MRFLVSVAFLLTVSSLLVSG.

It belongs to the scoloptoxin-19 family. Contains 6 disulfide bonds. In terms of tissue distribution, expressed by the venom gland.

The protein resides in the secreted. The polypeptide is U-scoloptoxin(19)-Sm1a (Scolopendra morsitans (Tanzanian blue ringleg centipede)).